The following is a 137-amino-acid chain: Peptide methionine sulfoxide reductase MsrB (137 aa).

The 123-residue stretch at 7–129 folds into the MsrB domain; the sequence is AEELKKKLSE…NSASLAFSDE (123 aa). Positions 46, 49, 95, and 98 each coordinate Zn(2+). The active-site Nucleophile is cysteine 118.

This sequence belongs to the MsrB Met sulfoxide reductase family. The cofactor is Zn(2+).

The catalysed reaction is L-methionyl-[protein] + [thioredoxin]-disulfide + H2O = L-methionyl-(R)-S-oxide-[protein] + [thioredoxin]-dithiol. This chain is Peptide methionine sulfoxide reductase MsrB, found in Salmonella agona (strain SL483).